The chain runs to 174 residues: Ribosome maturation factor RimM (174 aa).

Positions Glu98–Leu171 constitute a PRC barrel domain.

The protein belongs to the RimM family. In terms of assembly, binds ribosomal protein uS19.

The protein resides in the cytoplasm. An accessory protein needed during the final step in the assembly of 30S ribosomal subunit, possibly for assembly of the head region. Essential for efficient processing of 16S rRNA. May be needed both before and after RbfA during the maturation of 16S rRNA. It has affinity for free ribosomal 30S subunits but not for 70S ribosomes. The protein is Ribosome maturation factor RimM of Bacillus licheniformis (strain ATCC 14580 / DSM 13 / JCM 2505 / CCUG 7422 / NBRC 12200 / NCIMB 9375 / NCTC 10341 / NRRL NRS-1264 / Gibson 46).